A 455-amino-acid polypeptide reads, in one-letter code: Polyadenylation factor subunit 2 (455 aa).

7 WD repeats span residues 80-119, 122-162, 164-203, 206-245, 248-288, 291-331, and 337-376; these read KVKH…FETI, AHDT…KELD, IHTE…QERV, GHHW…CVST, KFKH…NELM, RDEV…EKPI, and AHEK…DPNA. Disordered regions lie at residues 406 to 425 and 430 to 455; these read EYGA…TQYN and RVPE…GLSI. Over residues 432-446 the composition is skewed to basic and acidic residues; sequence PEIKEPTPTTDKEQR.

It is found in the nucleus. Functionally, required for 3'-end cleavage and polyadenylation of pre-mRNAs. Also involved in chromosome segregation where it has a role in chromosome attachment to the mitotic spindle. The chain is Polyadenylation factor subunit 2 (PFS2) from Candida glabrata (strain ATCC 2001 / BCRC 20586 / JCM 3761 / NBRC 0622 / NRRL Y-65 / CBS 138) (Yeast).